Reading from the N-terminus, the 539-residue chain is F-box/WD-40 repeat-containing protein At5g21040 (539 aa).

Residues 65 to 111 (STTIIDLPQALISEILNCLDPKELGLVSCVSTYLHRLASEHHAWKEF) form the F-box domain. WD repeat units follow at residues 160–199 (GHTE…SIAA), 201–239 (KPLG…RNLF), 255–292 (GHEG…CVKT), 294–330 (RHSD…PLAI), 334–373 (AHEG…SETS), 382–419 (PHTS…KTNR), and 433–477 (PPQR…EIER). The disordered stretch occupies residues 505–539 (GRPDQCSIAAHKNPINGERNRAWHSKRRASGKAKA). The span at 526-539 (AWHSKRRASGKAKA) shows a compositional bias: basic residues.

The polypeptide is F-box/WD-40 repeat-containing protein At5g21040 (Arabidopsis thaliana (Mouse-ear cress)).